The chain runs to 230 residues: Thymidylate kinase (230 aa).

An ATP-binding site is contributed by 20–27 (GGEGAGKS).

It belongs to the thymidylate kinase family.

The catalysed reaction is dTMP + ATP = dTDP + ADP. Its function is as follows. Phosphorylation of dTMP to form dTDP in both de novo and salvage pathways of dTTP synthesis. The chain is Thymidylate kinase from Rhodopseudomonas palustris (strain ATCC BAA-98 / CGA009).